We begin with the raw amino-acid sequence, 364 residues long: Probable protein disulfide-isomerase A6 (364 aa).

Positions 1–28 (MKMEMHQIWSRIALASFAFAILFVSVSA) are cleaved as a signal peptide. Thioredoxin domains lie at 29–137 (DDVV…TEGG) and 139–256 (NVKI…EKSG). Catalysis depends on nucleophile residues Cys58, Cys61, Cys177, and Cys180. 2 disulfides stabilise this stretch: Cys58-Cys61 and Cys177-Cys180.

It belongs to the protein disulfide isomerase family.

The protein localises to the endoplasmic reticulum lumen. It carries out the reaction Catalyzes the rearrangement of -S-S- bonds in proteins.. The sequence is that of Probable protein disulfide-isomerase A6 from Medicago sativa (Alfalfa).